We begin with the raw amino-acid sequence, 164 residues long: Ubiquitin-fold modifier-conjugating enzyme 1 (164 aa).

Cys116 serves as the catalytic Glycyl thioester intermediate.

The protein belongs to the ubiquitin-conjugating enzyme family. UFC1 subfamily.

In terms of biological role, E2-like enzyme which forms an intermediate with UFM1 via a thioester linkage. The protein is Ubiquitin-fold modifier-conjugating enzyme 1 of Drosophila ananassae (Fruit fly).